The following is a 673-amino-acid chain: Protein-arginine deiminase type-2 (673 aa).

Position 1 is an N-acetylmethionine (Met1). Residues Asp131, Asp133, Asp135, Glu139, Asn162, Asp164, Asp166, Asp174, Asp177, Lys179, Asp185, and Asp188 each contribute to the Ca(2+) site. At Arg352 the chain carries Citrulline. Positions 362, 397, 416, 419, and 420 each coordinate Ca(2+). Cys655 functions as the Nucleophile in the catalytic mechanism.

This sequence belongs to the protein arginine deiminase family. In terms of assembly, homodimer. Ca(2+) serves as cofactor. In terms of tissue distribution, expressed in various tissues including muscle, uterus, spinal cord, salivary gland and pancreas.

The protein resides in the cytoplasm. The enzyme catalyses L-arginyl-[protein] + H2O = L-citrullyl-[protein] + NH4(+). Catalyzes the deimination of arginine residues of proteins. The protein is Protein-arginine deiminase type-2 (Padi2) of Mus musculus (Mouse).